The following is a 480-amino-acid chain: F-box only protein 3 (480 aa).

The 47-residue stretch at 10–56 folds into the F-box domain; that stretch reads LLTLESLPTDPLLLILSFVDYRDLINCCYVSRRLSQLSTHDPLWRRH. The ApaG domain occupies 278 to 408; the sequence is VATTGDITVS…FHMACPTFRV (131 aa). Residues 419-458 show a composition bias toward acidic residues; sequence EYEEMEEEAEEEEEEENDDSADMDESDESDADENESDEGE. Residues 419–463 are disordered; sequence EYEEMEEEAEEEEEEENDDSADMDESDESDADENESDEGEGEARR.

In terms of assembly, part of a SCF (SKP1-cullin-F-box) protein ligase complex SCF(FBXO3) consisting of FBXO3, SKP1, CUL1 and RBX1. Interacts with PML, interaction is direct and takes place either alone or within the SCF complex.

Its subcellular location is the nucleus. It participates in protein modification; protein ubiquitination. Substrate recognition component of the SCF (SKP1-CUL1-F-box protein)-type E3 ubiquitin ligase complex, SCF(FBXO3), which mediates the ubiquitination and subsequent proteasomal degradation of target proteins. Mediates the ubiquitination of HIPK2 and probably that of EP300, leading to rapid degradation by the proteasome. In the presence of PML, HIPK2 ubiquitination still occurs, but degradation is prevented. PML, HIPK2 and FBXO3 may act synergically to activate p53/TP53-dependent transactivation. The SCF(FBXO3) also acts as a regulator of inflammation by mediating ubiquitination and degradation of FBXL2: specifically recognizes FBXL2 phosphorylated at 'Thr-404' and promotes its ubiquitination. The chain is F-box only protein 3 (Fbxo3) from Mus musculus (Mouse).